We begin with the raw amino-acid sequence, 174 residues long: Methylated-DNA--protein-cysteine methyltransferase (174 aa).

Catalysis depends on Cys-141, which acts as the Nucleophile; methyl group acceptor.

This sequence belongs to the MGMT family.

It is found in the cytoplasm. It catalyses the reaction a 6-O-methyl-2'-deoxyguanosine in DNA + L-cysteinyl-[protein] = S-methyl-L-cysteinyl-[protein] + a 2'-deoxyguanosine in DNA. The catalysed reaction is a 4-O-methyl-thymidine in DNA + L-cysteinyl-[protein] = a thymidine in DNA + S-methyl-L-cysteinyl-[protein]. In terms of biological role, involved in the cellular defense against the biological effects of O6-methylguanine (O6-MeG) and O4-methylthymine (O4-MeT) in DNA. Repairs the methylated nucleobase in DNA by stoichiometrically transferring the methyl group to a cysteine residue in the enzyme. This is a suicide reaction: the enzyme is irreversibly inactivated. In Thermococcus kodakarensis (strain ATCC BAA-918 / JCM 12380 / KOD1) (Pyrococcus kodakaraensis (strain KOD1)), this protein is Methylated-DNA--protein-cysteine methyltransferase.